Consider the following 524-residue polypeptide: Light-independent protochlorophyllide reductase subunit B (524 aa).

Position 36 (Asp36) interacts with [4Fe-4S] cluster. Asp290 (proton donor) is an active-site residue. 425–426 (GL) provides a ligand contact to substrate.

Belongs to the ChlB/BchB/BchZ family. As to quaternary structure, protochlorophyllide reductase is composed of three subunits; ChlL, ChlN and ChlB. Forms a heterotetramer of two ChlB and two ChlN subunits. Requires [4Fe-4S] cluster as cofactor.

It carries out the reaction chlorophyllide a + oxidized 2[4Fe-4S]-[ferredoxin] + 2 ADP + 2 phosphate = protochlorophyllide a + reduced 2[4Fe-4S]-[ferredoxin] + 2 ATP + 2 H2O. It participates in porphyrin-containing compound metabolism; chlorophyll biosynthesis (light-independent). Its function is as follows. Component of the dark-operative protochlorophyllide reductase (DPOR) that uses Mg-ATP and reduced ferredoxin to reduce ring D of protochlorophyllide (Pchlide) to form chlorophyllide a (Chlide). This reaction is light-independent. The NB-protein (ChlN-ChlB) is the catalytic component of the complex. The sequence is that of Light-independent protochlorophyllide reductase subunit B from Synechococcus sp. (strain CC9605).